The following is a 1150-amino-acid chain: Solute carrier family 12 member 6 (1150 aa).

Over 1–135 (MHPPETTTKM…DEYFDKNLAL (135 aa)) the chain is Cytoplasmic. The disordered stretch occupies residues 20-66 (TKIDDIPGLSDTSPDLSSRSSSRVRFSSRESVPETSRSEPMSEMSGA). Residues 28–45 (LSDTSPDLSSRSSSRVRF) show a composition bias toward low complexity. A phosphoserine mark is found at Ser32 and Ser120. The chain crosses the membrane as a discontinuously helical span at residues 136–158 (FEEEMDTRPKVSSLLNRMANYTN). Positions 147 and 148 each coordinate K(+). A Phosphoserine modification is found at Ser148. Residue Asn151 coordinates chloride. Residues 159-165 (LTQGAKE) lie on the Extracellular side of the membrane. The disordered stretch occupies residues 161–181 (QGAKEHEEAENITEGKKKPTK). Basic and acidic residues predominate over residues 163-177 (AKEHEEAENITEGKK). A helical membrane pass occupies residues 166–188 (HEEAENITEGKKKPTKTPQMGTF). Residues 189-211 (MGVYLPCLQNIFGVILFLRLTWV) are Cytoplasmic-facing. The helical transmembrane segment at 212-245 (VGTAGVLQAFAIVLICCCCTMLTAISMSAIATNG) threads the bilayer. Topologically, residues 246–263 (VVPAGGSYFMISRALGPE) are extracellular. Transmembrane regions (helical) follow at residues 264–287 (FGGAVGLCFYLGTTFAAAMYILGA) and 288–316 (IEIFLVYIVPRAAIFHSDDALKESAAMLN). The Extracellular segment spans residues 317–433 (NMRVYGTAFL…FVHNNVTSIQ (117 aa)). A disulfide bridge connects residues Cys375 and Cys390. N-linked (GlcNAc...) asparagine glycosylation is found at Asn379, Asn398, Asn411, and Asn428. A disulfide bond links Cys410 and Cys420. Residues 434-454 (GIPGLASGIITENLWSNYLPK) form a helical membrane-spanning segment. K(+) contacts are provided by Ile443, Thr444, and Asn446. Positions 443 and 444 each coordinate chloride. Chloride contacts are provided by Leu447 and Trp448. The Cytoplasmic portion of the chain corresponds to 455-464 (GEIIEKPSAK). Residues 465 to 487 (SSDVLGSLNHEYVLVDITTSFTL) form a helical membrane-spanning segment. At 488–518 (LVGIFFPSVTGIMAGSNRSGDLKDAQKSIPI) the chain is on the extracellular side. A helical transmembrane segment spans residues 519–545 (GTILAILTTSFVYLSNVVLFGACIEGV). The Cytoplasmic portion of the chain corresponds to 546-568 (VLRDKFGDAVKGNLVVGTLSWPS). Helical transmembrane passes span 569-589 (PWVIVIGSFFSTCGAGLQSLT) and 590-612 (GAPRLLQAIAKDNIIPFLRVFGH). Ile603 is a chloride binding site. Topologically, residues 613 to 629 (SKANGEPTWALLLTAAI) are cytoplasmic. 2 consecutive transmembrane segments (helical) span residues 630–649 (AELGILIASLDLVAPILSMF) and 650–665 (FLMCYLFVNLACALQT). Residues 666-1150 (LLRTPNWRPR…GGSEVITIYS (485 aa)) are Cytoplasmic-facing. The tract at residues 682 to 691 (ALSFMGMSIC) is scissor helix. The residue at position 736 (Ser736) is a Phosphoserine. The residue at position 778 (Thr778) is a Phosphothreonine. At Ser981 the chain carries Phosphoserine. A Phosphothreonine; by OXSR1 and STK39 modification is found at Thr991. 3 positions are modified to phosphoserine: Ser1023, Ser1029, and Ser1032. The residue at position 1048 (Thr1048) is a Phosphothreonine; by OXSR1 and STK39. Tyr1121 is subject to Phosphotyrosine. An interaction with CKB region spans residues 1133-1150 (ERVLLVRGGGSEVITIYS).

This sequence belongs to the SLC12A transporter family. K/Cl co-transporter subfamily. In terms of assembly, homodimer; adopts a domain-swap conformation at the scissor helices connecting the transmembrane domain and C-terminal domain. Heterodimer with K-Cl cotransporter SLC12A5. Interacts (via C-terminus) with CKB; the interaction may be required for potassium-chloride cotransport activity. Phosphorylated, phosphorylation regulates transporter activity. Phosphorylated at Thr-991 and Thr-1048 by OXSR1/OSR1 and STK39/SPAK downstream of WNK kinases (WNK1, WNK2, WNK3 or WNK4), inhibiting the potassium-chloride cotransport activity. In terms of processing, N-glycosylated. In terms of tissue distribution, expressed in brain (at protein level). Highly expressed in heart, brain and kidney. Detected at lower levels in skeletal muscle, placenta, lung and pancreas. Detected in umbilical vein endothelial cells. More abundant in kidney. As to expression, testis specific.

Its subcellular location is the cell membrane. It is found in the basolateral cell membrane. The catalysed reaction is K(+)(in) + chloride(in) = K(+)(out) + chloride(out). Inhibited following phosphorylation by OXSR1/OSR1 and STK39/SPAK: phosphorylation takes place downstream of WNK kinases (WNK1, WNK2, WNK3 or WNK4) in response to hyperosmotic stress and subsequent cell shrinkage. Activated by N-ethylmaleimide (NEM). Inhibited by DIOA, bumetanide and furosemide. Functionally, mediates electroneutral potassium-chloride cotransport when activated by cell swelling. May contribute to cell volume homeostasis in single cells. Its function is as follows. Mediates electroneutral potassium-chloride cotransport when activated by cell swelling. May contribute to cell volume homeostasis in single cells. Mediates electroneutral potassium-chloride cotransport when activated by cell swelling. May contribute to cell volume homeostasis in single cells. This chain is Solute carrier family 12 member 6, found in Homo sapiens (Human).